The sequence spans 123 residues: MNIPENLQYTAEHLWVRPDENGHWLAGITDHAQDLLGDIVYVEAPKPGTRLSAGQPCGLVESVKTGSDLHAPLDGTVTAINEALQITPEEINDRPYDAWIFSFEPEHAPTGLLSAAEYRALLG.

Residues 23–104 (HWLAGITDHA…PYDAWIFSFE (82 aa)) form the Lipoyl-binding domain. An N6-lipoyllysine modification is found at Lys64.

This sequence belongs to the GcvH family. In terms of assembly, the glycine cleavage system is composed of four proteins: P, T, L and H. Requires (R)-lipoate as cofactor.

Functionally, the glycine cleavage system catalyzes the degradation of glycine. The H protein shuttles the methylamine group of glycine from the P protein to the T protein. The chain is Glycine cleavage system H protein from Methylobacillus flagellatus (strain ATCC 51484 / DSM 6875 / VKM B-1610 / KT).